A 242-amino-acid chain; its full sequence is uncharacterized protein (242 aa).

A signal peptide spans 1-17 (MKFSPAYLLAFAPIVAA). Asn47, Asn86, Asn122, Asn159, and Asn178 each carry an N-linked (GlcNAc...) asparagine glycan. The segment at 176–214 (NANESTADGQAQSGSSGSSSDSGSHSGHSSATQTSSTTA) is disordered. Residues 180-214 (STADGQAQSGSSGSSSDSGSHSGHSSATQTSSTTA) show a composition bias toward low complexity. The GPI-like-anchor amidated alanine moiety is linked to residue Ala218. Residues 219-242 (GAVALETAAWGILGAAVVGGLAVL) constitute a propeptide, removed in mature form.

Post-translationally, the GPI-like anchor contains a phosphoceramide lipid group. The anchor position has not been determined.

Its subcellular location is the cell membrane. This is an uncharacterized protein from Aspergillus fumigatus (strain ATCC MYA-4609 / CBS 101355 / FGSC A1100 / Af293) (Neosartorya fumigata).